We begin with the raw amino-acid sequence, 1155 residues long: Pesticidal crystal protein Cry1Ab (1155 aa).

Belongs to the delta endotoxin family.

Promotes colloidosmotic lysis by binding to the midgut epithelial cells of many lepidopteran larvae. In Bacillus thuringiensis subsp. aizawai, this protein is Pesticidal crystal protein Cry1Ab (cry1Ab).